Consider the following 284-residue polypeptide: MPNRRRRKLSTAMSAVAALAVASPCAYFLVYESTETTERPEHHEFKQAAVLTDLPGELMSALSQGLSQFGINIPPVPSLTGSGDASTGLTGPGLTSPGLTSPGLTSPGLTDPALTSPGLTPTLPGSLAAPGTTLAPTPGVGANPALTNPALTSPTGATPGLTSPTGLDPALGGANEIPITTPVGLDPGADGTYPILGDPTLGTIPSSPATTSTGGGGLVNDVMQVANELGASQAIDLLKGVLMPSIMQAVQNGGAAAPAASPPVPPIPAAAAVPPTDPITVPVA.

A signal peptide spans 1–22 (MPNRRRRKLSTAMSAVAALAVA). The Extracellular segment spans residues 23-252 (SPCAYFLVYE…MPSIMQAVQN (230 aa)). The interval 80 to 216 (TGSGDASTGL…SPATTSTGGG (137 aa)) is disordered. A compositionally biased stretch (low complexity) spans 86–110 (STGLTGPGLTSPGLTSPGLTSPGLT). Tandem repeats lie at residues 92–96 (PGLTS), 97–101 (PGLTS), 102–106 (PGLTS), 107–111 (PGLTD), 112–116 (PALTS), 117–121 (PGLTP), 144–148 (PALTN), 149–153 (PALTS), 154–158 (PTGAT), 159–163 (PGLTS), 164–168 (PTGLD), and 169–173 (PALGG). Residues 92–121 (PGLTSPGLTSPGLTSPGLTDPALTSPGLTP) are 6 X 5 AA tandem repeats of P-[GA]-L-T-S. A 6 X 5 AA approximate tandem repeats of P-[ATG]-[LG]-X-X region spans residues 144–173 (PALTNPALTSPTGATPGLTSPTGLDPALGG). The span at 145–165 (ALTNPALTSPTGATPGLTSPT) shows a compositional bias: polar residues. A compositionally biased stretch (low complexity) spans 202 to 212 (GTIPSSPATTS). A helical membrane pass occupies residues 253–273 (GGAAAPAASPPVPPIPAAAAV). Residues 274 to 284 (PPTDPITVPVA) are Cytoplasmic-facing.

The protein to M.leprae 28 kDa antigen.

Its subcellular location is the cell membrane. In terms of biological role, surface-exposed protein required for multiplication and intracellular growth. This chain is Exported repetitive protein (erp), found in Mycobacterium bovis (strain ATCC BAA-935 / AF2122/97).